A 226-amino-acid polypeptide reads, in one-letter code: 7-cyano-7-deazaguanine synthase (226 aa).

7-17 (LSGGMDSLVTT) provides a ligand contact to ATP. Residues C187, C195, C198, and C201 each coordinate Zn(2+).

This sequence belongs to the QueC family. Requires Zn(2+) as cofactor.

The enzyme catalyses 7-carboxy-7-deazaguanine + NH4(+) + ATP = 7-cyano-7-deazaguanine + ADP + phosphate + H2O + H(+). Its pathway is purine metabolism; 7-cyano-7-deazaguanine biosynthesis. In terms of biological role, catalyzes the ATP-dependent conversion of 7-carboxy-7-deazaguanine (CDG) to 7-cyano-7-deazaguanine (preQ(0)). The sequence is that of 7-cyano-7-deazaguanine synthase from Chlorobium phaeobacteroides (strain DSM 266 / SMG 266 / 2430).